The following is a 493-amino-acid chain: Alpha-amylase-related protein (493 aa).

An N-terminal signal peptide occupies residues methionine 1–alanine 19. Position 20 is a pyrrolidone carboxylic acid (glutamine 20). A disulfide bond links cysteine 47 and cysteine 103. Ca(2+) is bound by residues asparagine 117, glutamine 168, and aspartate 177. Cysteine 156 and cysteine 170 are joined by a disulfide. Arginine 205 is a chloride binding site. Aspartate 207 (nucleophile) is an active-site residue. Histidine 211 contributes to the Ca(2+) binding site. The active-site Proton donor is the glutamate 244. Asparagine 307 and arginine 342 together coordinate chloride. Intrachain disulfides connect cysteine 375/cysteine 381, cysteine 417/cysteine 440, and cysteine 447/cysteine 459.

The protein belongs to the glycosyl hydrolase 13 family. Monomer. The cofactor is Ca(2+). Chloride is required as a cofactor.

The protein localises to the secreted. The enzyme catalyses Endohydrolysis of (1-&gt;4)-alpha-D-glucosidic linkages in polysaccharides containing three or more (1-&gt;4)-alpha-linked D-glucose units.. The chain is Alpha-amylase-related protein (Amyrel) from Drosophila yakuba (Fruit fly).